Consider the following 366-residue polypeptide: Flagellar P-ring protein (366 aa).

An N-terminal signal peptide occupies residues 1-22 (MFTRKSVILMAVLLIWSAVSYA).

It belongs to the FlgI family. The basal body constitutes a major portion of the flagellar organelle and consists of four rings (L,P,S, and M) mounted on a central rod.

Its subcellular location is the periplasm. The protein resides in the bacterial flagellum basal body. In terms of biological role, assembles around the rod to form the L-ring and probably protects the motor/basal body from shearing forces during rotation. This chain is Flagellar P-ring protein, found in Hydrogenovibrio crunogenus (strain DSM 25203 / XCL-2) (Thiomicrospira crunogena).